The primary structure comprises 142 residues: RNA polymerase-binding transcription factor DksA (142 aa).

3 disordered regions span residues 1-20 (MQTATVLVEKSDYRPSEDEP), 51-70 (HLQKETENHADLADRASSET), and 119-142 (RPTATMSVEAQERHERRERVHRDD). The segment at 104-128 (CEETGEPIGLARLEARPTATMSVEA) adopts a dksA C4-type zinc-finger fold. Residues 128 to 142 (AQERHERRERVHRDD) are compositionally biased toward basic and acidic residues.

The protein belongs to the DksA family. Interacts directly with the RNA polymerase.

It localises to the cytoplasm. Functionally, transcription factor that acts by binding directly to the RNA polymerase (RNAP). Required for negative regulation of rRNA expression and positive regulation of several amino acid biosynthesis promoters. This chain is RNA polymerase-binding transcription factor DksA, found in Caulobacter vibrioides (strain ATCC 19089 / CIP 103742 / CB 15) (Caulobacter crescentus).